Consider the following 286-residue polypeptide: Apoptosis inhibitor 1 (286 aa).

BIR repeat units lie at residues 29–96 (LIER…CAYA) and 131–199 (LQSR…CYFV). Zn(2+) is bound by residues Cys169, Cys172, His189, and Cys196. The RING-type zinc finger occupies 238-274 (CKVCLERQRDAVLMPCRHFCVCVQCYFGLDQKCPTCR).

In terms of biological role, acts by blocking cellular apoptosis early in infection. Later, stimulates caspase-3-like protease activity and induces apoptosis, probably to favor the release of occluded virions. The chain is Apoptosis inhibitor 1 (IAP1) from Lepidoptera (butterflies and moths).